The primary structure comprises 389 residues: MALSDRLEMVNPSEIRKLFDLAQGIEGIISLGIGEPDFDTPEHIKEYAKEALDKGLTHYSPNIGILELREAVAEKFKKHNGIDADPKTQIMITVGTNQQILMGLATFLKDNEEVLIPSPMFVSYAPAVILAGGKPVEVPTYEENEFRLSVDELEKYVTPKTRALIINTPNNPTGAVLTKKDLEEIADFAVEHDLMILSDEVYEYFVYDGVKNYSIASLDGMFERTITMNGFSKTFAMTGWRLGFLAAPEWVVEKMVRFQMYNATCPVTFIQYAAAKALRDERSWQAVEEMRREYERRRNLVWKRLNEMGLPTVKPKGAFYIFPRIKDTGLSSKEFSELMIKEAKVVVVPGSAFGQAGEGYVRISYATAYEKLEEAMDRMEKVLKEKKLV.

At Lys233 the chain carries N6-(pyridoxal phosphate)lysine.

Belongs to the class-I pyridoxal-phosphate-dependent aminotransferase family. As to quaternary structure, homodimer. Requires pyridoxal 5'-phosphate as cofactor.

The enzyme catalyses an aromatic L-alpha-amino acid + 2-oxoglutarate = an aromatic oxo-acid + L-glutamate. Functionally, catalyzes the transamination of phenylalanine, tyrosine and tryptophan. Shows virtually no activity towards aspartic acid, alanine, valine or isoleucine. The protein is Aromatic-amino-acid aminotransferase 2 of Thermococcus litoralis (strain ATCC 51850 / DSM 5473 / JCM 8560 / NS-C).